The chain runs to 548 residues: Probable malate:quinone oxidoreductase (548 aa).

The interval 522–548 is disordered; that stretch reads KPQAADSTPKPQLKPKPVQKEVADIAL. Over residues 539 to 548 the composition is skewed to basic and acidic residues; sequence VQKEVADIAL.

Belongs to the MQO family. The cofactor is FAD.

It catalyses the reaction (S)-malate + a quinone = a quinol + oxaloacetate. The protein operates within carbohydrate metabolism; tricarboxylic acid cycle; oxaloacetate from (S)-malate (quinone route): step 1/1. This is Probable malate:quinone oxidoreductase from Escherichia coli O9:H4 (strain HS).